A 77-amino-acid chain; its full sequence is Large ribosomal subunit protein bL28 (77 aa).

Residues 1–20 form a disordered region; sequence MSRVCQVTGKGPVTGNNISH.

It belongs to the bacterial ribosomal protein bL28 family.

The chain is Large ribosomal subunit protein bL28 from Pseudomonas fluorescens (strain SBW25).